Consider the following 72-residue polypeptide: Dermaseptin-A4 (72 aa).

Residues 1 to 22 (MAFLKKSLFLVLFLGMVSLSIC) form the signal peptide. Residues 23–41 (EEEKREEENEQEDDEQSEE) constitute a propeptide that is removed on maturation. The disordered stretch occupies residues 24–43 (EEKREEENEQEDDEQSEEKR). The segment covering 30-39 (ENEQEDDEQS) has biased composition (acidic residues). At A69 the chain carries Alanine amide. The propeptide occupies 71 to 72 (EQ).

The protein belongs to the frog skin active peptide (FSAP) family. Dermaseptin subfamily. Expressed by the skin glands.

It is found in the secreted. Possesses a potent antimicrobial activity against Gram-positive and Gram-negative bacteria. Probably acts by disturbing membrane functions with its amphipathic structure. This chain is Dermaseptin-A4, found in Agalychnis annae (Blue-sided leaf frog).